A 168-amino-acid polypeptide reads, in one-letter code: Protein OPG162 (168 aa).

A helical transmembrane segment spans residues 15 to 37 (LSVPAAIMMLLSTIISGIGTFLH). 2 disulfides stabilise this stretch: Cys75/Cys162 and Cys141/Cys154. A glycan (N-linked (GlcNAc...) asparagine; by host) is linked at Asn133.

The protein belongs to the orthopoxvirus OPG162 protein family. As to quaternary structure, interacts with protein OPG161. Interacts with protein OPG164. Interacts with protein OPG190.

The protein resides in the virion membrane. It localises to the host Golgi apparatus. Its function is as follows. Forms a complex with OPG162 and OPG190 to coordinate the incorporation of OPG164 into wrapped enveloped virion (EV) membranes and, subsequently, the production of actin tails. Therefore plays an essential role in efficient cell-to-cell spread of viral particles. This is Protein OPG162 (OPG162) from Monkeypox virus.